Reading from the N-terminus, the 230-residue chain is UPF0173 metal-dependent hydrolase MK1542 (230 aa).

This sequence belongs to the UPF0173 family.

This chain is UPF0173 metal-dependent hydrolase MK1542, found in Methanopyrus kandleri (strain AV19 / DSM 6324 / JCM 9639 / NBRC 100938).